Reading from the N-terminus, the 336-residue chain is NmrA-like family domain-containing oxidoreductase FrzB (336 aa).

Lysine 135 is an NADP(+) binding site.

It belongs to the NmrA-type oxidoreductase family.

The catalysed reaction is 4-{[(2S,5S)-5-[(4-hydroxyphenyl)methyl]-2,5-dihydropyrazin-2-yl]methyl}phenol + 2 NADPH + 2 H(+) = (S,S)-2,5-di-(p-hydroxybenzyl)piperazine + 2 NADP(+). The protein operates within secondary metabolite biosynthesis. In terms of biological role, nmrA-like family domain-containing oxidoreductase; part of the gene cluster that mediates the biosynthesis of the alkaloid (-)-FR901483, a potent immunosuppressant that shows efficacy in animal models and a probable inhibitor of purine nucleotide biosynthesis by targeting phosphoribosylpyrophosphate amidotransferase (PPAT). Within the pathway, FrzB catalyzes the reduction of 4-{[(2S,5S)-5-[(4-hydroxyphenyl)methyl]-2,5-dihydropyrazin-2-yl]methyl}phenol to produce the (S,S)-dityrosyl-piperazine intermediate. The biosynthesis of (-)-FR901483 starts with the condensation of two L-tyrosines to yield (S,S)-dityrosyl-piperazine. This process occurs in 3 steps with the non-canonical nonribosomal peptide synthetase FrzA catalyzing the reduction of L-tyrosine into L-tyrosinal, the spontaneous condensation of 2 L-tyrosinal units, and the subsequent reduction by the NmrA-like family domain-containing oxidoreductase FrzB. The cytochrome P450 monooxygenase FrzC then performs coupling between N10 and C1' to morph the piperazine into a 1,4-diazabicyclo[3.2.1]octane spiro-fused to a 2,5-cyclohexadienone. The dienone portion is further reduced to cyclohexanone by the flavin-dependent reductase FrzD. The methyltranserases (MTs) FrzE and FrzF are then involved in the methylation at the C10' amine and the C4 phenolic oxygen, respectively. The order of the two MTs appear to be interchangeable. Cleavage of the C9-N10' bond by the dioxygenase FrzG then leads to formation of a conjugated iminium. In addition to the oxidation of C9, an additional dehydrogenation between C7 and C8 can occur to give a likely shunt product. The next biosynthetic step is the intramolecular aldol condensation catalyzed by the newly identified aldolase FrzH to yield an aza-tricyclic product with the formation of a C9-C3' bond. The short-chain dehydrogenase/reductase FrzI then produces dephospho-(-)-FR901483 that is phosphorylated at C4'-OH into (-)-FR901483 by the phosphotransferase FrzJ. The protein is NmrA-like family domain-containing oxidoreductase FrzB of Cladobotryum sp.